Consider the following 154-residue polypeptide: Urease accessory protein UreE (154 aa).

The segment at 134 to 154 (PESGAYGKSGHNHGHSHSHED) is disordered. The segment covering 143–154 (GHNHGHSHSHED) has biased composition (basic residues).

It belongs to the UreE family.

Its subcellular location is the cytoplasm. Its function is as follows. Involved in urease metallocenter assembly. Binds nickel. Probably functions as a nickel donor during metallocenter assembly. The sequence is that of Urease accessory protein UreE from Alteromonas mediterranea (strain DSM 17117 / CIP 110805 / LMG 28347 / Deep ecotype).